Reading from the N-terminus, the 168-residue chain is Endoribonuclease YbeY (168 aa).

Zn(2+)-binding residues include His-132, His-136, and His-142.

The protein belongs to the endoribonuclease YbeY family. Zn(2+) is required as a cofactor.

The protein localises to the cytoplasm. Functionally, single strand-specific metallo-endoribonuclease involved in late-stage 70S ribosome quality control and in maturation of the 3' terminus of the 16S rRNA. This Clostridium perfringens (strain SM101 / Type A) protein is Endoribonuclease YbeY.